A 458-amino-acid chain; its full sequence is L-hydantoinase (458 aa).

Zn(2+) is bound by residues histidine 60, histidine 62, lysine 147, histidine 183, histidine 239, and aspartate 312. Residue lysine 147 is modified to N6-carboxylysine.

In terms of assembly, homotetramer. Zn(2+) is required as a cofactor. Carboxylation allows a single lysine to coordinate two zinc ions.

Rather more predominant for the cleavage of aryl- than for alkyl-hydantoin derivatives. The stereoselectivity of this enzyme depends on the substrate used for bioconversion: strictly L-selective for the cleavage of D,L-5-indolylmethylhydantoin, but D-selective for the hydrolysis of D,L-methylthioethylhydantoin. The protein is L-hydantoinase (lhyD) of Paenarthrobacter aurescens (Arthrobacter aurescens).